The primary structure comprises 325 residues: 6-phosphogluconolactonase 3, chloroplastic (325 aa).

Residues 1–68 constitute a chloroplast transit peptide; the sequence is MASSSCFLRS…KSSDTRRKVK (68 aa). Residues 51–73 are disordered; the sequence is SIGTGSTKKSSDTRRKVKSMATT. A Microbody targeting signal motif is present at residues 323–325; that stretch reads SKL.

Belongs to the glucosamine/galactosamine-6-phosphate isomerase family. 6-phosphogluconolactonase subfamily. Interacts with TRXM2. As to expression, expressed in roots, leaves and shoots.

It localises to the plastid. The protein localises to the chloroplast. The protein resides in the peroxisome. It catalyses the reaction 6-phospho-D-glucono-1,5-lactone + H2O = 6-phospho-D-gluconate + H(+). Its pathway is carbohydrate degradation; pentose phosphate pathway; D-ribulose 5-phosphate from D-glucose 6-phosphate (oxidative stage): step 2/3. Catalyzes the hydrolysis of 6-phosphogluconolactone to 6-phosphogluconate. Involved in the regulation of cellular redox state; enzymatic activity is required for this function. Required for sugar-dependent expression of nitrate assimilation genes in the nucleus of root cells. The protein is 6-phosphogluconolactonase 3, chloroplastic of Arabidopsis thaliana (Mouse-ear cress).